Reading from the N-terminus, the 280-residue chain is MQRLHLHLLSDSTGETLEMIAKAALAQFDGADVVRHFWPMVRSMQHLDRIMGEIAANPGLVLYTLVNAETRERLEQRCAALGLPSVAALDAVTDALQQQLGIQAKGRPGRQHMMDEAYFARVDAIQFTIAHDDGVGWENWEEADIVLAGVSRSSKTPTSIYLANRGYKVANIPIVVESPPPSMLFSLRRPLVVGLTTSPERLIAVRRNRLLSLNQAPETAYVDNEQVTREVQFARRMFADNGWPVIDVSRRSIEETAAAVINLYNERTAAGASGDGVKPI.

149-156 (GVSRSSKT) contributes to the ADP binding site.

Belongs to the pyruvate, phosphate/water dikinase regulatory protein family. PDRP subfamily.

It catalyses the reaction N(tele)-phospho-L-histidyl/L-threonyl-[pyruvate, phosphate dikinase] + ADP = N(tele)-phospho-L-histidyl/O-phospho-L-threonyl-[pyruvate, phosphate dikinase] + AMP + H(+). The enzyme catalyses N(tele)-phospho-L-histidyl/O-phospho-L-threonyl-[pyruvate, phosphate dikinase] + phosphate + H(+) = N(tele)-phospho-L-histidyl/L-threonyl-[pyruvate, phosphate dikinase] + diphosphate. Functionally, bifunctional serine/threonine kinase and phosphorylase involved in the regulation of the pyruvate, phosphate dikinase (PPDK) by catalyzing its phosphorylation/dephosphorylation. The polypeptide is Putative pyruvate, phosphate dikinase regulatory protein (Novosphingobium aromaticivorans (strain ATCC 700278 / DSM 12444 / CCUG 56034 / CIP 105152 / NBRC 16084 / F199)).